The sequence spans 300 residues: tRNA dimethylallyltransferase (300 aa).

9–16 (GPTASGKT) contributes to the ATP binding site. 11–16 (TASGKT) lines the substrate pocket. The segment at 34–37 (DSQQ) is interaction with substrate tRNA.

The protein belongs to the IPP transferase family. Monomer. Mg(2+) serves as cofactor.

The catalysed reaction is adenosine(37) in tRNA + dimethylallyl diphosphate = N(6)-dimethylallyladenosine(37) in tRNA + diphosphate. Its function is as follows. Catalyzes the transfer of a dimethylallyl group onto the adenine at position 37 in tRNAs that read codons beginning with uridine, leading to the formation of N6-(dimethylallyl)adenosine (i(6)A). This Anaeromyxobacter sp. (strain Fw109-5) protein is tRNA dimethylallyltransferase.